Here is a 253-residue protein sequence, read N- to C-terminus: Ferritin-2, chloroplastic (253 aa).

A chloroplast-targeting transit peptide spans 1-45 (MLHKASPALSLLSSGYTGGGNLFPPSRNSSNLLFSPSGSRFSVQA). An extension peptide (EP) region spans residues 46–82 (AKGTNTKSLTGVVFEPFEEVKKEMELVPTTPFVSLAR). The Ferritin-like diiron domain maps to 83-236 (HKFSDDSESA…EYVAQLRRIG (154 aa)). Residues E100, E135, H138, E184, and Q218 each contribute to the Fe cation site.

Belongs to the ferritin family. As to quaternary structure, oligomer of 24 subunits. There are two types of subunits: L (light) chain and H (heavy) chain. The major chain can be light or heavy, depending on the species and tissue type. The functional molecule forms a roughly spherical shell with a diameter of 12 nm and contains a central cavity into which the insoluble mineral iron core is deposited.

Its subcellular location is the plastid. It localises to the chloroplast. The catalysed reaction is 4 Fe(2+) + O2 + 4 H(+) = 4 Fe(3+) + 2 H2O. Functionally, stores iron in a soluble, non-toxic, readily available form. Important for iron homeostasis. Has ferroxidase activity. Iron is taken up in the ferrous form and deposited as ferric hydroxides after oxidation. In Arabidopsis thaliana (Mouse-ear cress), this protein is Ferritin-2, chloroplastic (FER2).